An 891-amino-acid polypeptide reads, in one-letter code: Mating-type protein A-alpha Y1 (891 aa).

Residues 146 to 205 constitute a DNA-binding region (homeobox); that stretch reads SKKPRPKFHSEYTPLLELYFRFNAYPTYADRRVLAEKTGMLTRQITVWFQNHRRRAKGPL. Disordered stretches follow at residues 241–291, 319–339, 393–437, 610–718, and 800–822; these read PITL…PSTL, DIEMKDSSKPKRRKMKKLPKG, TRKP…RRVS, ARRK…EQSL, and MNWTASVGSNAQDPASQESGGDE. Over residues 244 to 257 the composition is skewed to polar residues; the sequence is LGNNKTPDLTTSSR. A compositionally biased stretch (basic residues) spans 328 to 337; it reads PKRRKMKKLP. The segment covering 427-437 has biased composition (low complexity); sequence ASSTVPSRRVS. Residues 627–638 show a composition bias toward basic residues; sequence KKDKKERKKAGL. Composition is skewed to low complexity over residues 651-667 and 676-710; these read VSSRASSLDSDVSTSAR and QPSSSSRASSVASSGRTPSLSSTSSRRSSGMSMPS. A compositionally biased stretch (polar residues) spans 800 to 818; that stretch reads MNWTASVGSNAQDPASQES.

The protein localises to the nucleus. In terms of biological role, specifies A-alpha-1 mating-type. May regulate the expression of genes specific to the homokaryotic cell type. The sequence is that of Mating-type protein A-alpha Y1 from Schizophyllum commune (Split gill fungus).